A 554-amino-acid chain; its full sequence is Urocanate hydratase (554 aa).

NAD(+) contacts are provided by residues 51 to 52, Gln-129, 175 to 177, Glu-195, 241 to 242, 262 to 266, 272 to 273, and Tyr-321; these read GG, GMG, NA, QTSAH, and YL. Residue Cys-409 is part of the active site. NAD(+) is bound at residue Gly-491.

It belongs to the urocanase family. NAD(+) serves as cofactor.

The protein localises to the cytoplasm. It catalyses the reaction 4-imidazolone-5-propanoate = trans-urocanate + H2O. Its pathway is amino-acid degradation; L-histidine degradation into L-glutamate; N-formimidoyl-L-glutamate from L-histidine: step 2/3. Its function is as follows. Catalyzes the conversion of urocanate to 4-imidazolone-5-propionate. In Methylobacterium nodulans (strain LMG 21967 / CNCM I-2342 / ORS 2060), this protein is Urocanate hydratase.